The sequence spans 243 residues: Bidirectional sugar transporter SWEET2a (243 aa).

Positions M1–G15 are cleaved as a signal peptide. At S16–Y24 the chain is on the extracellular side. A helical membrane pass occupies residues G25–F45. The MtN3/slv 1 domain maps to G27–K112. Residues K46–Q56 are Cytoplasmic-facing. A helical membrane pass occupies residues F57–F79. Topologically, residues V80 to V90 are extracellular. The helical transmembrane segment at N91–A111 threads the bilayer. At K112 to S118 the chain is on the cytoplasmic side. A helical transmembrane segment spans residues S119–F139. Over D140 to L146 the chain is Extracellular. The helical transmembrane segment at F147–I167 threads the bilayer. Residues F147–K229 form the MtN3/slv 2 domain. The Cytoplasmic segment spans residues N168–P180. The chain crosses the membrane as a helical span at residues F181 to L201. The Extracellular portion of the chain corresponds to H202 to D203. Residues F204 to Y224 form a helical membrane-spanning segment. Over G225–T243 the chain is Cytoplasmic.

Belongs to the SWEET sugar transporter family. Forms homooligomers and/or heterooligomers.

The protein resides in the cell membrane. Functionally, mediates both low-affinity uptake and efflux of sugar across the plasma membrane. In Oryza sativa subsp. indica (Rice), this protein is Bidirectional sugar transporter SWEET2a (SWEET2A).